A 357-amino-acid chain; its full sequence is Protein phosphatase 1 regulatory subunit 42 (357 aa).

LRR repeat units follow at residues 29–50, 51–72, 73–94, 95–116, 117–138, 147–168, and 169–190; these read KITH…SLCR, NLSV…NYTT, NLTH…SSLK, KLEK…EGLE, ELRE…LFDP, SLST…EILE, and NLNH…ELLL. Residues 204 to 242 enclose the LRRCT domain; it reads NPVCLKPKYRDKLILTSKSLEFLDGKEIKDMERQFLMNW. The interval 329 to 357 is disordered; the sequence is ESSLTKNDIHEPHLLQNPKVKENLSEKKE. Residues 335–357 show a composition bias toward basic and acidic residues; it reads NDIHEPHLLQNPKVKENLSEKKE.

Interacts with PPP1CC isoform gamma-2; the interaction is direct. Interacts with actin, dynein, KIF5B, KIFC1 and tubulin. Associates with microtubules. Post-translationally, phosphorylated; during the first round of spermatogenesis with a marginal increase at 21 days after birth. As to expression, testis-specific. Expressed in spermatids (at protein level). Testis-specific.

The protein resides in the cytoplasm. It is found in the cytoskeleton. It localises to the microtubule organizing center. The protein localises to the centrosome. Its function is as follows. Regulates phosphatase activity of protein phosphatase 1 (PP1) complexes in the testis. This chain is Protein phosphatase 1 regulatory subunit 42 (Ppp1r42), found in Mus musculus (Mouse).